Consider the following 195-residue polypeptide: MRKILHIRSSIKEENSVSRKIGDDLISHFKSTDKVKVSERDLVDNSVEHINPDFINAMANNNQDRLATSNKLIEELFENDIIAIESPMYNFSIPSTLKSWIDNIMIARKTFLYTANGPEGLVKNKKAILVLSKGNIYSEGAAKPLDFQENYLKTILNFIGINDITVICAEGVDLNAEIREKSLKQVEQQIKNLSI.

FMN is bound by residues serine 10, serine 16 to serine 18, and methionine 88 to phenylalanine 91.

It belongs to the azoreductase type 1 family. Homodimer. FMN serves as cofactor.

It catalyses the reaction 2 a quinone + NADH + H(+) = 2 a 1,4-benzosemiquinone + NAD(+). The catalysed reaction is N,N-dimethyl-1,4-phenylenediamine + anthranilate + 2 NAD(+) = 2-(4-dimethylaminophenyl)diazenylbenzoate + 2 NADH + 2 H(+). Quinone reductase that provides resistance to thiol-specific stress caused by electrophilic quinones. Functionally, also exhibits azoreductase activity. Catalyzes the reductive cleavage of the azo bond in aromatic azo compounds to the corresponding amines. The protein is FMN-dependent NADH:quinone oxidoreductase of Francisella philomiragia subsp. philomiragia (strain ATCC 25017 / CCUG 19701 / FSC 153 / O#319-036).